Reading from the N-terminus, the 303-residue chain is Movement protein (303 aa).

Belongs to the tobamovirus movement protein family.

The protein resides in the host cytoplasm. Its subcellular location is the host cytoskeleton. The protein localises to the host cell junction. It is found in the host plasmodesma. In terms of biological role, transports viral genome to neighboring plant cells directly through plasmosdesmata, without any budding. The movement protein allows efficient cell to cell propagation, by bypassing the host cell wall barrier. Forms a ribonucleoprotein complex with viral RNA. Binds microtubules and modulates microtubule stability. Can bind double-stranded DNA. This Odontoglossum ringspot virus (isolate Korean Cy) (ORSV-Cy) protein is Movement protein (MP).